A 1722-amino-acid polypeptide reads, in one-letter code: Lymphocyte antigen 75 (1722 aa).

The N-terminal stretch at 1–27 is a signal peptide; that stretch reads MRTGWATPRRPAGLLMLLFWFFDLAEP. At 28–1666 the chain is on the extracellular side; sequence SGRAANDPFT…VVCKVPLGPD (1639 aa). The Ricin B-type lectin domain maps to 33–156; it reads NDPFTIVHGN…ESLCDQPYHE (124 aa). The N-linked (GlcNAc...) asparagine glycan is linked to N135. One can recognise a Fibronectin type-II domain in the interval 164-211; the sequence is SYGRPCEFPFLIDGTWHHDCILDEDHSGPWCATTLNYEYDRKWGICLK. Disulfide bonds link C169–C194, C183–C209, C247–C340, and C317–C332. One can recognise a C-type lectin 1 domain in the interval 225–341; it reads QFGSCYQFNT…CEAQLPYVCR (117 aa). N-linked (GlcNAc...) asparagine glycans are attached at residues N345 and N377. C-type lectin domains follow at residues 368 to 486, 493 to 625, 652 to 778, and 818 to 931; these read NNGF…YVCK, NDAS…ICKK, ASLS…IYLR, and IEGS…FICE. Disulfide bonds link C389–C485 and C462–C477. N-linked (GlcNAc...) asparagine glycosylation is present at N529. A disulfide bridge connects residues C597 and C614. 2 cysteine pairs are disulfide-bonded: C840-C930 and C904-C922. N843 and N865 each carry an N-linked (GlcNAc...) asparagine glycan. Residue Y933 is modified to Phosphotyrosine. N-linked (GlcNAc...) asparagine glycosylation is found at N934, N1076, and N1103. In terms of domain architecture, C-type lectin 6 spans 958-1091; it reads FQNKCFLKIK…ERHFVSLCQK (134 aa). C1060 and C1080 form a disulfide bridge. The region spanning 1110 to 1222 is the C-type lectin 7 domain; sequence YLNNLYKIIP…DNQPGAICYY (113 aa). A disulfide bond links C1197 and C1211. N-linked (GlcNAc...) asparagine glycosylation is found at N1225, N1320, and N1392. The C-type lectin 8 domain maps to 1251–1374; that stretch reads FQNCCYNFII…VIEEAVYFHQ (124 aa). C-type lectin domains are found at residues 1401 to 1513 and 1542 to 1661; these read YEDG…ICYK and YKGH…VCKV. C1488 and C1502 form a disulfide bridge. 2 N-linked (GlcNAc...) asparagine glycosylation sites follow: N1593 and N1626. C1635 and C1650 form a disulfide bridge. A helical membrane pass occupies residues 1667 to 1691; that stretch reads YTAIAIIVATLSILVLMGGLIWFLF. The Cytoplasmic portion of the chain corresponds to 1692–1722; the sequence is QRHRLHLAGFSSVRYAQGVNEDEIMLPSFHD. S1703 and S1719 each carry phosphoserine.

N-glycosylated. As to expression, expressed in spleen, thymus, colon and peripheral blood lymphocytes. Detected in myeloid and B-lymphoid cell lines. Isoform 2 and isoform 3 are expressed in malignant Hodgkin lymphoma cells called Hodgkin and Reed-Sternberg (HRS) cells.

It localises to the membrane. Acts as an endocytic receptor to direct captured antigens from the extracellular space to a specialized antigen-processing compartment. Causes reduced proliferation of B-lymphocytes. The chain is Lymphocyte antigen 75 (LY75) from Homo sapiens (Human).